We begin with the raw amino-acid sequence, 341 residues long: Long-chain acyl-[acyl-carrier-protein] reductase (341 aa).

It belongs to the short-chain dehydrogenases/reductases (SDR) family. It depends on a divalent metal cation as a cofactor.

The catalysed reaction is a long-chain fatty aldehyde + holo-[ACP] + NADP(+) = a long-chain fatty acyl-[ACP] + NADPH + H(+). It carries out the reaction a long-chain fatty aldehyde + holo-[ACP] + NAD(+) = a long-chain fatty acyl-[ACP] + NADH + H(+). Catalyzes the NADP-dependent reduction of long-chain acyl-ACP to the corresponding fatty aldehyde. Involved in the biosynthesis of alkanes, mainly heptadecane and pentadecane, by producing the fatty aldehydes used by aldehyde decarbonylase. The polypeptide is Long-chain acyl-[acyl-carrier-protein] reductase (Synechococcus elongatus (strain ATCC 33912 / PCC 7942 / FACHB-805) (Anacystis nidulans R2)).